We begin with the raw amino-acid sequence, 393 residues long: Probable protein phosphatase 2C 68 (393 aa).

The 304-residue stretch at Asp56–Ile359 folds into the PPM-type phosphatase domain. Positions 87, 88, 291, and 350 each coordinate Mn(2+).

This sequence belongs to the PP2C family. The cofactor is Mg(2+). Mn(2+) serves as cofactor.

It catalyses the reaction O-phospho-L-seryl-[protein] + H2O = L-seryl-[protein] + phosphate. The catalysed reaction is O-phospho-L-threonyl-[protein] + H2O = L-threonyl-[protein] + phosphate. In terms of biological role, may dephosphorylate and repress plasma membrane H(+)-ATPases (PM H(+)-ATPases, e.g. AHA1 and AHA2), thus influencing negatively plant growth and fitness. This chain is Probable protein phosphatase 2C 68, found in Arabidopsis thaliana (Mouse-ear cress).